The chain runs to 122 residues: Large ribosomal subunit protein uL14 (122 aa).

The protein belongs to the universal ribosomal protein uL14 family. In terms of assembly, part of the 50S ribosomal subunit. Forms a cluster with proteins L3 and L19. In the 70S ribosome, L14 and L19 interact and together make contacts with the 16S rRNA in bridges B5 and B8.

Binds to 23S rRNA. Forms part of two intersubunit bridges in the 70S ribosome. In Streptococcus pyogenes serotype M2 (strain MGAS10270), this protein is Large ribosomal subunit protein uL14.